Reading from the N-terminus, the 224-residue chain is Cutinase 1 (224 aa).

Positions 1-16 (MKFLSVLSLAITLAAA) are cleaved as a signal peptide. Residues C46 and C125 are joined by a disulfide bond. The Nucleophile role is filled by S136. C187 and C194 are oxidised to a cystine. D191 is an active-site residue. H204 (proton donor/acceptor) is an active-site residue.

Belongs to the cutinase family. In terms of processing, the 2 disulfide bonds play a critical role in holding the catalytic residues in juxta-position; reduction of the disulfide bridges results in the complete inactivation of the enzyme. The N-terminus is blocked.

It is found in the secreted. It carries out the reaction cutin + H2O = cutin monomers.. With respect to regulation, inhibited by diisopropyl fluorophosphate (DFP). Catalyzes the hydrolysis of complex carboxylic polyesters found in the cell wall of plants. Degrades cutin, a macromolecule that forms the structure of the plant cuticle. Allows pathogenic fungi to penetrate through the cuticular barrier into the host plant during the initial stage of fungal infection. The sequence is that of Cutinase 1 (CUTA) from Colletotrichum gloeosporioides (Anthracnose fungus).